A 235-amino-acid polypeptide reads, in one-letter code: Sugar fermentation stimulation protein homolog (235 aa).

Belongs to the SfsA family.

This Serratia proteamaculans (strain 568) protein is Sugar fermentation stimulation protein homolog.